Consider the following 1211-residue polypeptide: Diacylglycerol kinase 1 (1211 aa).

The tract at residues 174 to 244 (HHSLGGHLSH…RNSSKKSSNS (71 aa)) is disordered. The segment covering 197-230 (VTPSPLASGPSMFQASNPARRSVDSSPSHSATNH) has biased composition (polar residues). Low complexity predominate over residues 231 to 244 (SQMSRNSSKKSSNS). EF-hand domains lie at 286–321 (RPED…MMAV) and 331–366 (ELRP…TIPL). The Ca(2+) site is built by Asp299, Asp301, Asn303, Glu310, Asp344, Asp346, Asp348, Thr350, and Glu355. 2 Phorbol-ester/DAG-type zinc fingers span residues 382-432 (IHVW…PASC) and 449-498 (LHHW…KKEC). The 135-residue stretch at 548–682 (ELSCPLLVFV…LDRWSIEVTN (135 aa)) folds into the DAGKc domain. 3 disordered regions span residues 789-841 (TLRT…ETEK), 874-893 (AATA…QRNK), and 910-958 (DHED…QQQQ). The segment covering 795–805 (SSSSSNTSSGS) has biased composition (low complexity). Residues 826-841 (DVREKSVPRRSGETEK) show a composition bias toward basic and acidic residues. Over residues 879–893 (PVGSNQSDNSSQRNK) the composition is skewed to polar residues. The span at 931 to 958 (NSIPATPATPITPTTPNAASSVLQQQQQ) shows a compositional bias: low complexity.

It belongs to the eukaryotic diacylglycerol kinase family. In 10-11 hours embryos, expression is abundant in a limited number of cells in the procephalic region and in the ventral nerve cord. Predominantly expressed in the adult nervous system and muscle: including compound eyes, brain cortex, fibrillar muscle, and tubular muscle.

The catalysed reaction is a 1,2-diacyl-sn-glycerol + ATP = a 1,2-diacyl-sn-glycero-3-phosphate + ADP + H(+). Its function is as follows. Upon cell stimulation converts the second messenger diacylglycerol into phosphatidate, initiating the resynthesis of phosphatidylinositols and attenuating protein kinase C activity. May have a role in the development of the embryonic nervous system and the function of the adult nervous system and muscle; regulating signal transduction in neurons. In Drosophila melanogaster (Fruit fly), this protein is Diacylglycerol kinase 1 (Dgk).